We begin with the raw amino-acid sequence, 206 residues long: Large ribosomal subunit protein uL4 (206 aa).

Residues 47-77 form a disordered region; that stretch reads TRAQKGRSDVTGSTRKQWRQKGTGRARTGAA.

Belongs to the universal ribosomal protein uL4 family. As to quaternary structure, part of the 50S ribosomal subunit.

Functionally, one of the primary rRNA binding proteins, this protein initially binds near the 5'-end of the 23S rRNA. It is important during the early stages of 50S assembly. It makes multiple contacts with different domains of the 23S rRNA in the assembled 50S subunit and ribosome. Forms part of the polypeptide exit tunnel. The chain is Large ribosomal subunit protein uL4 from Nitrosomonas europaea (strain ATCC 19718 / CIP 103999 / KCTC 2705 / NBRC 14298).